We begin with the raw amino-acid sequence, 570 residues long: Urease subunit alpha (570 aa).

A Urease domain is found at 131–570; that stretch reads GGFDAHIHFI…LPMAQRYFLF (440 aa). His-136, His-138, and Lys-219 together coordinate Ni(2+). Lys-219 is subject to N6-carboxylysine. Residue His-221 coordinates substrate. Residues His-248 and His-274 each coordinate Ni(2+). His-322 serves as the catalytic Proton donor. Asp-362 contributes to the Ni(2+) binding site.

Belongs to the metallo-dependent hydrolases superfamily. Urease alpha subunit family. Heterotrimer of UreA (gamma), UreB (beta) and UreC (alpha) subunits. Three heterotrimers associate to form the active enzyme. Ni cation serves as cofactor. Carboxylation allows a single lysine to coordinate two nickel ions.

It localises to the cytoplasm. The catalysed reaction is urea + 2 H2O + H(+) = hydrogencarbonate + 2 NH4(+). It participates in nitrogen metabolism; urea degradation; CO(2) and NH(3) from urea (urease route): step 1/1. The protein is Urease subunit alpha of Chelativorans sp. (strain BNC1).